A 175-amino-acid chain; its full sequence is uncharacterized protein (175 aa).

This is an uncharacterized protein from Human cytomegalovirus (strain AD169) (HHV-5).